Here is a 606-residue protein sequence, read N- to C-terminus: Threonine dehydratase 1 biosynthetic, chloroplastic (606 aa).

Lysine 154 carries the N6-(pyridoxal phosphate)lysine modification. ACT-like domains follow at residues 432–504 (AVLA…NLTD) and 526–597 (LLCR…MESL).

Belongs to the serine/threonine dehydratase family. Pyridoxal 5'-phosphate serves as cofactor. In terms of tissue distribution, expressed constitutively in all tissues examined including root, stem, petiole, leaf, immature flower bud, unopened flower and opened flower with the highest expression in opened flower and lowest in leaf.

It localises to the plastid. The protein resides in the chloroplast. The catalysed reaction is L-threonine = 2-oxobutanoate + NH4(+). The protein operates within amino-acid biosynthesis; L-isoleucine biosynthesis; 2-oxobutanoate from L-threonine: step 1/1. Its activity is regulated as follows. Strongly inhibited by 1 mM isoleucine. Has a housekeeping role in isoleucine biosynthesis. The chain is Threonine dehydratase 1 biosynthetic, chloroplastic from Solanum lycopersicum (Tomato).